The primary structure comprises 242 residues: Histone-lysine N-methyltransferase set-1 (242 aa).

Positions 1-61 (MKVAAKKLAT…TRSRKGVSVK (61 aa)) are disordered. The segment covering 30-43 (SENPSSLASHSSSS) has biased composition (low complexity). In terms of domain architecture, SET spans 104–226 (RLLEVYKDVV…QGEELLYDYG (123 aa)). S-adenosyl-L-methionine contacts are provided by residues 114–116 (KGR), Tyr-159, and 186–187 (NH).

Belongs to the class V-like SAM-binding methyltransferase superfamily. Histone-lysine methyltransferase family. PR/SET subfamily. In terms of tissue distribution, in embryos, it is expressed ubiquitously. In late embryos, it is expressed in hypodermal seam cells. In L3 and L4 larvae and thereafter, it is expressed in vulval precursor cells. In adult males, it is also expressed in 6 unidentified posterior cells.

Its subcellular location is the nucleus. It is found in the chromosome. The catalysed reaction is L-lysyl(20)-[histone H4] + S-adenosyl-L-methionine = N(6)-methyl-L-lysyl(20)-[histone H4] + S-adenosyl-L-homocysteine + H(+). Histone methyltransferase that specifically monomethylates 'Lys-20' of histone H4 (H4K20me1). H4K20me1 is enriched on hermaphrodite X chromosomes and during mitosis. Involved in dosage compensation by repression of X-linked gene expression in hermaphrodites. Plays a role in growth and body fat regulation downstream of the TOR complex 2 pathway. The protein is Histone-lysine N-methyltransferase set-1 (set-1) of Caenorhabditis elegans.